Consider the following 423-residue polypeptide: Glycine amidinotransferase, mitochondrial (423 aa).

The transit peptide at 1 to 43 (MLRVRCLRGGSRGAEAVHYIGSRLGRTLTGWVQRTFQSTQAAT) directs the protein to the mitochondrion. A phosphoserine mark is found at Ser46 and Ser49. Asp170 contributes to the arginine binding site. Residues Asp254 and His303 contribute to the active site. Arginine is bound by residues Asp305, Arg322, Ser354, and Ser355. Lys385 is subject to N6-acetyllysine. The Amidino-cysteine intermediate role is filled by Cys407.

This sequence belongs to the amidinotransferase family. Homodimer. There is an equilibrium between the monomeric and dimeric forms, shifted towards the side of the monomer. In terms of tissue distribution, expressed in brain, heart, kidney, liver, lung, salivary gland and skeletal muscle tissue, with the highest expression in kidney. Biallelically expressed in placenta and fetal tissues.

It is found in the mitochondrion inner membrane. The protein localises to the cytoplasm. The catalysed reaction is L-arginine + glycine = guanidinoacetate + L-ornithine. It catalyses the reaction 4-aminobutanoate + L-arginine = 4-guanidinobutanoate + L-ornithine. The enzyme catalyses beta-alanine + L-arginine = 3-guanidinopropanoate + L-ornithine. It carries out the reaction taurine + L-arginine = taurocyamine + L-ornithine. Its pathway is amine and polyamine biosynthesis; creatine biosynthesis; creatine from L-arginine and glycine: step 1/2. Functionally, transamidinase that catalyzes the transfer of the amidino group of L-arginine onto the amino moiety of acceptor metabolites such as glycine, beta-alanine, gamma-aminobutyric acid (GABA) and taurine yielding the corresponding guanidine derivatives. Catalyzes the rate-limiting step of creatine biosynthesis, namely the transfer of the amidino group from L-arginine to glycine to generate guanidinoacetate, which is then methylated by GAMT to form creatine. Provides creatine as a source for ATP generation in tissues with high energy demands, in particular skeletal muscle, heart and brain. This Homo sapiens (Human) protein is Glycine amidinotransferase, mitochondrial (GATM).